The chain runs to 105 residues: MESALNQEFQIDFCVKNKKLLKILANVLIASWLSFVVFLILGCIAIDLFRFDLYSQFFFNHLSTLSALAWTFFVLAILFGAATLAINGFFYKEIRKKSAFKEDSK.

2 consecutive transmembrane segments (helical) span residues 26–46 (NVLI…CIAI) and 66–86 (SALA…TLAI).

It is found in the cell membrane. This is an uncharacterized protein from Mycoplasma pneumoniae (strain ATCC 29342 / M129 / Subtype 1) (Mycoplasmoides pneumoniae).